Here is a 421-residue protein sequence, read N- to C-terminus: Gamma-glutamyl phosphate reductase (421 aa).

Belongs to the gamma-glutamyl phosphate reductase family.

It is found in the cytoplasm. It catalyses the reaction L-glutamate 5-semialdehyde + phosphate + NADP(+) = L-glutamyl 5-phosphate + NADPH + H(+). It participates in amino-acid biosynthesis; L-proline biosynthesis; L-glutamate 5-semialdehyde from L-glutamate: step 2/2. Its function is as follows. Catalyzes the NADPH-dependent reduction of L-glutamate 5-phosphate into L-glutamate 5-semialdehyde and phosphate. The product spontaneously undergoes cyclization to form 1-pyrroline-5-carboxylate. This is Gamma-glutamyl phosphate reductase from Brucella abortus (strain 2308).